The primary structure comprises 147 residues: Probable disulfide formation protein (147 aa).

A helical transmembrane segment spans residues 9–28 (NYSLYFAWLTALIATLGSLY). Cys38 and Cys41 are joined by a disulfide. The next 2 membrane-spanning stretches (helical) occupy residues 43-62 (YQRV…AYRT) and 69-86 (YALP…YQYL). Cys99 and Cys106 form a disulfide bridge. The helical transmembrane segment at 115 to 138 (GFITLPFLGMLATLIMSFFLIMAF) threads the bilayer.

It belongs to the DsbB family. BdbC subfamily.

The protein resides in the cell inner membrane. Functionally, required for disulfide bond formation in some proteins. This is Probable disulfide formation protein from Coxiella burnetii (strain CbuG_Q212) (Coxiella burnetii (strain Q212)).